The chain runs to 159 residues: MSEIRTGLGWDVHRIATGRKMILGGVTVPCEFGLEGHSDADVLAHAITDAILGAAALGDIGMHFPDSDPRWKGCDSLVFLRHARDLATQKGYRIVNVDSTIILERPKLKDFRQTIRERLAETLELDVDRVSVKFKTAEKVGPVGEGRSAESQAIVTLEK.

2 residues coordinate a divalent metal cation: D11 and H13. 4-CDP-2-C-methyl-D-erythritol 2-phosphate contacts are provided by residues 11 to 13 (DVH) and 37 to 38 (HS). H45 is an a divalent metal cation binding site. 4-CDP-2-C-methyl-D-erythritol 2-phosphate contacts are provided by residues 59 to 61 (DIG) and 64 to 68 (FPDSD).

Belongs to the IspF family. Homotrimer. It depends on a divalent metal cation as a cofactor.

The catalysed reaction is 4-CDP-2-C-methyl-D-erythritol 2-phosphate = 2-C-methyl-D-erythritol 2,4-cyclic diphosphate + CMP. The protein operates within isoprenoid biosynthesis; isopentenyl diphosphate biosynthesis via DXP pathway; isopentenyl diphosphate from 1-deoxy-D-xylulose 5-phosphate: step 4/6. In terms of biological role, involved in the biosynthesis of isopentenyl diphosphate (IPP) and dimethylallyl diphosphate (DMAPP), two major building blocks of isoprenoid compounds. Catalyzes the conversion of 4-diphosphocytidyl-2-C-methyl-D-erythritol 2-phosphate (CDP-ME2P) to 2-C-methyl-D-erythritol 2,4-cyclodiphosphate (ME-CPP) with a corresponding release of cytidine 5-monophosphate (CMP). The protein is 2-C-methyl-D-erythritol 2,4-cyclodiphosphate synthase of Solibacter usitatus (strain Ellin6076).